Reading from the N-terminus, the 1463-residue chain is Gag-Pol polyprotein (1463 aa).

G2 carries the N-myristoyl glycine; by host lipid modification. Positions 7–31 are interaction with Gp41; that stretch reads VLRGKKADELEKIRLRPGGKKKYRL. The Nuclear export signal motif lies at 16–22; the sequence is LEKIRLR. Residues 26-32 carry the Nuclear localization signal motif; that stretch reads KKKYRLK. The segment at 112–138 is disordered; the sequence is TKTTEKMPSTSRPTAPPSGNGGNFPVQ. Residues 191-228 form an interaction with human PPIA/CYPA and NUP153 region; it reads NCVGDHQAAMQIIREIINEEAADWDAQHPIPGPLPAGQ. The dimerization/Multimerization of capsid protein p24 stretch occupies residues 279–365; the sequence is YNPTNILDIK…GGPGQKARLM (87 aa). 2 consecutive CCHC-type zinc fingers follow at residues 389-406 and 410-427; these read IKCW…QCRA and QGCW…KCPE. Positions 441–508 are disordered; sequence EAPQFPCGPN…TRDTMQRDDR (68 aa). Residues 462 to 508 are compositionally biased toward basic and acidic residues; that stretch reads RPSRGPTREVHAAREKAERAEREAIQRSDRGLPAARETRDTMQRDDR. The interval 513–517 is dimerization of protease; that stretch reads PQFSL. The region spanning 532-601 is the Peptidase A2 domain; that stretch reads VEVLLDTGAD…TPINIFGRNI (70 aa). D537 functions as the For protease activity; shared with dimeric partner in the catalytic mechanism. Dimerization of protease regions lie at residues 561–567 and 600–612; these read GIGGFIN and NILT…LNLP. In terms of domain architecture, Reverse transcriptase spans 655–845; the sequence is EGQLEEAPPT…PPYQWMGYEL (191 aa). Mg(2+) is bound by residues D721, D796, and D797. Residues 838 to 846 are RT 'primer grip'; sequence YQWMGYELW. The Tryptophan repeat motif motif lies at 1008 to 1024; that stretch reads WEQWWDNYWQVTWIPDW. Residues 1044–1167 form the RNase H type-1 domain; sequence ILGAETFYTD…VDHLVSQGIR (124 aa). Residues D1053, E1088, D1108, and D1159 each coordinate Mg(2+). The segment at 1173–1214 adopts an Integrase-type zinc-finger fold; it reads EKIEPAQEEHEKYHSNVKELSHKFGLPKLVARQIVNTCTQCQ. Zn(2+) contacts are provided by H1182, H1186, C1210, and C1213. The Integrase catalytic domain maps to 1223–1374; that stretch reads QVNAELGTWQ…TPAERLINMV (152 aa). Residues D1234, D1286, and E1322 each contribute to the Mg(2+) site. The integrase-type DNA-binding region spans 1393–1440; the sequence is FRVYFREGRDQLWKGPGELLWKGDGAVIVKVGADIKIIPRRKAKIIKD.

As to quaternary structure, homotrimer; further assembles as hexamers of trimers. Interacts with gp41 (via C-terminus). Interacts with host CALM1; this interaction induces a conformational change in the Matrix protein, triggering exposure of the myristate group. Interacts with host AP3D1; this interaction allows the polyprotein trafficking to multivesicular bodies during virus assembly. Part of the pre-integration complex (PIC) which is composed of viral genome, matrix protein, Vpr and integrase. In terms of assembly, homodimer; the homodimer further multimerizes as homohexamers or homopentamers. Interacts with human PPIA/CYPA. Interacts with human NUP153. Interacts with host PDZD8; this interaction stabilizes the capsid. Interacts with monkey TRIM5; this interaction destabilizes the capsid. Homodimer, whose active site consists of two apposed aspartic acid residues. As to quaternary structure, heterodimer of p66 RT and p51 RT (RT p66/p51). Heterodimerization of RT is essential for DNA polymerase activity. The overall folding of the subdomains is similar in p66 RT and p51 RT but the spatial arrangements of the subdomains are dramatically different. In terms of assembly, homotetramer; may further associate as a homohexadecamer. Part of the pre-integration complex (PIC) which is composed of viral genome, matrix protein, Vpr and integrase. Interacts with human SMARCB1/INI1 and human PSIP1/LEDGF isoform 1. Interacts with human KPNA3; this interaction might play a role in nuclear import of the pre-integration complex. Interacts with human NUP153; this interaction might play a role in nuclear import of the pre-integration complex. Requires Mg(2+) as cofactor. In terms of processing, specific enzymatic cleavages by the viral protease yield mature proteins. The protease is released by autocatalytic cleavage. The polyprotein is cleaved during and after budding, this process is termed maturation. Proteolytic cleavage of p66 RT removes the RNase H domain to yield the p51 RT subunit. Nucleocapsid protein p7 might be further cleaved after virus entry.

The protein resides in the host cell membrane. The protein localises to the host endosome. It localises to the host multivesicular body. Its subcellular location is the virion membrane. It is found in the host nucleus. The protein resides in the host cytoplasm. The protein localises to the virion. The catalysed reaction is Endopeptidase for which the P1 residue is preferably hydrophobic.. The enzyme catalyses Endohydrolysis of RNA in RNA/DNA hybrids. Three different cleavage modes: 1. sequence-specific internal cleavage of RNA. Human immunodeficiency virus type 1 and Moloney murine leukemia virus enzymes prefer to cleave the RNA strand one nucleotide away from the RNA-DNA junction. 2. RNA 5'-end directed cleavage 13-19 nucleotides from the RNA end. 3. DNA 3'-end directed cleavage 15-20 nucleotides away from the primer terminus.. It catalyses the reaction 3'-end directed exonucleolytic cleavage of viral RNA-DNA hybrid.. It carries out the reaction DNA(n) + a 2'-deoxyribonucleoside 5'-triphosphate = DNA(n+1) + diphosphate. Its activity is regulated as follows. Protease: The viral protease is inhibited by many synthetic protease inhibitors (PIs), such as amprenavir, atazanavir, indinavir, loprinavir, nelfinavir, ritonavir and saquinavir. Use of protease inhibitors in tritherapy regimens permit more ambitious therapeutic strategies. Reverse transcriptase/ribonuclease H: RT can be inhibited either by nucleoside RT inhibitors (NRTIs) or by non nucleoside RT inhibitors (NNRTIs). NRTIs act as chain terminators, whereas NNRTIs inhibit DNA polymerization by binding a small hydrophobic pocket near the RT active site and inducing an allosteric change in this region. Classical NRTIs are abacavir, adefovir (PMEA), didanosine (ddI), lamivudine (3TC), stavudine (d4T), tenofovir (PMPA), zalcitabine (ddC), and zidovudine (AZT). Classical NNRTIs are atevirdine (BHAP U-87201E), delavirdine, efavirenz (DMP-266), emivirine (I-EBU), and nevirapine (BI-RG-587). The tritherapies used as a basic effective treatment of AIDS associate two NRTIs and one NNRTI. Mediates, with Gag polyprotein, the essential events in virion assembly, including binding the plasma membrane, making the protein-protein interactions necessary to create spherical particles, recruiting the viral Env proteins, and packaging the genomic RNA via direct interactions with the RNA packaging sequence (Psi). Gag-Pol polyprotein may regulate its own translation, by the binding genomic RNA in the 5'-UTR. At low concentration, the polyprotein would promote translation, whereas at high concentration, the polyprotein would encapsidate genomic RNA and then shut off translation. Its function is as follows. Targets the polyprotein to the plasma membrane via a multipartite membrane-binding signal, that includes its myristoylated N-terminus. Matrix protein is part of the pre-integration complex. Implicated in the release from host cell mediated by Vpu. Binds to RNA. Functionally, forms the conical core that encapsulates the genomic RNA-nucleocapsid complex in the virion. Most core are conical, with only 7% tubular. The core is constituted by capsid protein hexamer subunits. The core is disassembled soon after virion entry. Host restriction factors such as TRIM5-alpha or TRIMCyp bind retroviral capsids and cause premature capsid disassembly, leading to blocks in reverse transcription. Capsid restriction by TRIM5 is one of the factors which restricts HIV-1 to the human species. Host PIN1 apparently facilitates the virion uncoating. On the other hand, interactions with PDZD8 or CYPA stabilize the capsid. In terms of biological role, encapsulates and protects viral dimeric unspliced genomic RNA (gRNA). Binds these RNAs through its zinc fingers. Acts as a nucleic acid chaperone which is involved in rearangement of nucleic acid secondary structure during gRNA retrotranscription. Also facilitates template switch leading to recombination. As part of the polyprotein, participates in gRNA dimerization, packaging, tRNA incorporation and virion assembly. Aspartyl protease that mediates proteolytic cleavages of Gag and Gag-Pol polyproteins during or shortly after the release of the virion from the plasma membrane. Cleavages take place as an ordered, step-wise cascade to yield mature proteins. This process is called maturation. Displays maximal activity during the budding process just prior to particle release from the cell. Also cleaves Nef and Vif, probably concomitantly with viral structural proteins on maturation of virus particles. Hydrolyzes host EIF4GI and PABP1 in order to shut off the capped cellular mRNA translation. The resulting inhibition of cellular protein synthesis serves to ensure maximal viral gene expression and to evade host immune response. Its function is as follows. Multifunctional enzyme that converts the viral RNA genome into dsDNA in the cytoplasm, shortly after virus entry into the cell. This enzyme displays a DNA polymerase activity that can copy either DNA or RNA templates, and a ribonuclease H (RNase H) activity that cleaves the RNA strand of RNA-DNA heteroduplexes in a partially processive 3' to 5' endonucleasic mode. Conversion of viral genomic RNA into dsDNA requires many steps. A tRNA(3)-Lys binds to the primer-binding site (PBS) situated at the 5'-end of the viral RNA. RT uses the 3' end of the tRNA primer to perform a short round of RNA-dependent minus-strand DNA synthesis. The reading proceeds through the U5 region and ends after the repeated (R) region which is present at both ends of viral RNA. The portion of the RNA-DNA heteroduplex is digested by the RNase H, resulting in a ssDNA product attached to the tRNA primer. This ssDNA/tRNA hybridizes with the identical R region situated at the 3' end of viral RNA. This template exchange, known as minus-strand DNA strong stop transfer, can be either intra- or intermolecular. RT uses the 3' end of this newly synthesized short ssDNA to perform the RNA-dependent minus-strand DNA synthesis of the whole template. RNase H digests the RNA template except for two polypurine tracts (PPTs) situated at the 5'-end and near the center of the genome. It is not clear if both polymerase and RNase H activities are simultaneous. RNase H probably can proceed both in a polymerase-dependent (RNA cut into small fragments by the same RT performing DNA synthesis) and a polymerase-independent mode (cleavage of remaining RNA fragments by free RTs). Secondly, RT performs DNA-directed plus-strand DNA synthesis using the PPTs that have not been removed by RNase H as primers. PPTs and tRNA primers are then removed by RNase H. The 3' and 5' ssDNA PBS regions hybridize to form a circular dsDNA intermediate. Strand displacement synthesis by RT to the PBS and PPT ends produces a blunt ended, linear dsDNA copy of the viral genome that includes long terminal repeats (LTRs) at both ends. Functionally, catalyzes viral DNA integration into the host chromosome, by performing a series of DNA cutting and joining reactions. This enzyme activity takes place after virion entry into a cell and reverse transcription of the RNA genome in dsDNA. The first step in the integration process is 3' processing. This step requires a complex comprising the viral genome, matrix protein, Vpr and integrase. This complex is called the pre-integration complex (PIC). The integrase protein removes 2 nucleotides from each 3' end of the viral DNA, leaving recessed CA OH's at the 3' ends. In the second step, the PIC enters cell nucleus. This process is mediated through integrase and Vpr proteins, and allows the virus to infect a non dividing cell. This ability to enter the nucleus is specific of lentiviruses, other retroviruses cannot and rely on cell division to access cell chromosomes. In the third step, termed strand transfer, the integrase protein joins the previously processed 3' ends to the 5' ends of strands of target cellular DNA at the site of integration. The 5'-ends are produced by integrase-catalyzed staggered cuts, 5 bp apart. A Y-shaped, gapped, recombination intermediate results, with the 5'-ends of the viral DNA strands and the 3' ends of target DNA strands remaining unjoined, flanking a gap of 5 bp. The last step is viral DNA integration into host chromosome. This involves host DNA repair synthesis in which the 5 bp gaps between the unjoined strands are filled in and then ligated. Since this process occurs at both cuts flanking the HIV genome, a 5 bp duplication of host DNA is produced at the ends of HIV-1 integration. Alternatively, Integrase may catalyze the excision of viral DNA just after strand transfer, this is termed disintegration. The protein is Gag-Pol polyprotein (gag-pol) of Human immunodeficiency virus type 2 subtype A (isolate ST) (HIV-2).